Here is a 252-residue protein sequence, read N- to C-terminus: MALIEDRLFTRIKNRVGRAIADYNLIEEGDRIAVAVSGGKDSYTLLHILETLRKRAPVRYEIMAINIDSGYPGFRADIIEEHLREHGFVAHMEKTDHYGIIKEKRRPDSSYCSICARLKRGVLYGLAQRYNCNKLALGHHMDDFIETLLLNQFFVGSLKAMAPSMLADNGLTTVIRPLVYVPEEDIIPFSRNNRFPVLCCCCPVCGSADQQRKRMKELLKTLEKENPFVKKSLLKALANVQPRYLLDRRVKY.

Residues 37–42 (SGGKDS) carry the PP-loop motif motif. Cys112, Cys115, and Cys202 together coordinate [4Fe-4S] cluster.

This sequence belongs to the TtcA family. Homodimer. Mg(2+) serves as cofactor. Requires [4Fe-4S] cluster as cofactor.

It is found in the cytoplasm. The enzyme catalyses cytidine(32) in tRNA + S-sulfanyl-L-cysteinyl-[cysteine desulfurase] + AH2 + ATP = 2-thiocytidine(32) in tRNA + L-cysteinyl-[cysteine desulfurase] + A + AMP + diphosphate + H(+). It participates in tRNA modification. Catalyzes the ATP-dependent 2-thiolation of cytidine in position 32 of tRNA, to form 2-thiocytidine (s(2)C32). The sulfur atoms are provided by the cysteine/cysteine desulfurase (IscS) system. In Geotalea uraniireducens (strain Rf4) (Geobacter uraniireducens), this protein is tRNA-cytidine(32) 2-sulfurtransferase.